A 180-amino-acid chain; its full sequence is Large ribosomal subunit protein uL5 (180 aa).

The protein belongs to the universal ribosomal protein uL5 family. Part of the 50S ribosomal subunit; part of the 5S rRNA/L5/L18/L25 subcomplex. Contacts the 5S rRNA and the P site tRNA. Forms a bridge to the 30S subunit in the 70S ribosome.

Its function is as follows. This is one of the proteins that bind and probably mediate the attachment of the 5S RNA into the large ribosomal subunit, where it forms part of the central protuberance. In the 70S ribosome it contacts protein S13 of the 30S subunit (bridge B1b), connecting the 2 subunits; this bridge is implicated in subunit movement. Contacts the P site tRNA; the 5S rRNA and some of its associated proteins might help stabilize positioning of ribosome-bound tRNAs. The protein is Large ribosomal subunit protein uL5 of Streptococcus equi subsp. equi (strain 4047).